The following is a 230-amino-acid chain: Large ribosomal subunit protein uL1 (230 aa).

This sequence belongs to the universal ribosomal protein uL1 family. As to quaternary structure, part of the 50S ribosomal subunit.

Functionally, binds directly to 23S rRNA. The L1 stalk is quite mobile in the ribosome, and is involved in E site tRNA release. Protein L1 is also a translational repressor protein, it controls the translation of the L11 operon by binding to its mRNA. In Limosilactobacillus reuteri subsp. reuteri (strain JCM 1112) (Lactobacillus reuteri), this protein is Large ribosomal subunit protein uL1.